Consider the following 418-residue polypeptide: L-rhamnose isomerase (418 aa).

Mn(2+)-binding residues include His-262, Asp-294, and Asp-296.

Belongs to the rhamnose isomerase family. In terms of assembly, homotetramer. The cofactor is Mn(2+).

The protein resides in the cytoplasm. The enzyme catalyses L-rhamnopyranose = L-rhamnulose. It participates in carbohydrate degradation; L-rhamnose degradation; glycerone phosphate from L-rhamnose: step 1/3. Catalyzes the interconversion of L-rhamnose and L-rhamnulose. The polypeptide is L-rhamnose isomerase (Cronobacter sakazakii (strain ATCC BAA-894) (Enterobacter sakazakii)).